Consider the following 219-residue polypeptide: Phosphate-specific transport system accessory protein PhoU homolog 1 (219 aa).

Belongs to the PhoU family. In terms of assembly, homodimer.

The protein localises to the cytoplasm. Its function is as follows. Plays a role in the regulation of phosphate uptake. The sequence is that of Phosphate-specific transport system accessory protein PhoU homolog 1 from Methanothermobacter thermautotrophicus (strain ATCC 29096 / DSM 1053 / JCM 10044 / NBRC 100330 / Delta H) (Methanobacterium thermoautotrophicum).